The sequence spans 624 residues: uncharacterized protein (624 aa).

Positions 108–138 are disordered; the sequence is PTAWSGMESDSTASERSLPQRTDTTSVSSQY. Phosphoserine is present on S112. The span at 115–138 shows a compositional bias: polar residues; sequence ESDSTASERSLPQRTDTTSVSSQY. At S205 the chain carries Phosphoserine. Disordered stretches follow at residues 217-236 and 305-329; these read LMES…PGTR and KREC…PVSE.

This is an uncharacterized protein from Rattus norvegicus (Rat).